The sequence spans 481 residues: uncharacterized protein (481 aa).

A helical transmembrane segment spans residues 18 to 38; that stretch reads FMIVTAIAVAIFVVITGVVIF.

The protein localises to the cell inner membrane. Its function is as follows. Involved in DNA conjugation in the recipient strain. This is an uncharacterized protein from Mycolicibacterium smegmatis (strain MKD8) (Mycobacterium smegmatis).